A 363-amino-acid polypeptide reads, in one-letter code: D-alanine--D-alanine ligase (363 aa).

The 207-residue stretch at 146 to 352 folds into the ATP-grasp domain; that stretch reads KLCAADAGVA…FTALIDKLLH (207 aa). Residue 179–234 participates in ATP binding; that stretch reads DSTFGYPLFVKPASLGSSVGISKVHLPAALPEALKVACSYDRKILVEAAVSGKEIE. D305, E319, and N321 together coordinate Mg(2+).

It belongs to the D-alanine--D-alanine ligase family. Requires Mg(2+) as cofactor. Mn(2+) is required as a cofactor.

It localises to the cytoplasm. It catalyses the reaction 2 D-alanine + ATP = D-alanyl-D-alanine + ADP + phosphate + H(+). It participates in cell wall biogenesis; peptidoglycan biosynthesis. In terms of biological role, cell wall formation. The protein is D-alanine--D-alanine ligase of Chlorobium limicola (strain DSM 245 / NBRC 103803 / 6330).